A 208-amino-acid polypeptide reads, in one-letter code: Protein-L-isoaspartate O-methyltransferase (208 aa).

The active site involves S59.

Belongs to the methyltransferase superfamily. L-isoaspartyl/D-aspartyl protein methyltransferase family.

The protein resides in the cytoplasm. The enzyme catalyses [protein]-L-isoaspartate + S-adenosyl-L-methionine = [protein]-L-isoaspartate alpha-methyl ester + S-adenosyl-L-homocysteine. Catalyzes the methyl esterification of L-isoaspartyl residues in peptides and proteins that result from spontaneous decomposition of normal L-aspartyl and L-asparaginyl residues. It plays a role in the repair and/or degradation of damaged proteins. The polypeptide is Protein-L-isoaspartate O-methyltransferase (Vibrio vulnificus (strain CMCP6)).